Consider the following 341-residue polypeptide: Glyceraldehyde-3-phosphate dehydrogenase 3.1 (341 aa).

NAD(+) contacts are provided by residues 13 to 14 (RI), aspartate 35, and arginine 85. Residues 157–159 (SCT), threonine 188, 217–218 (TG), and arginine 240 each bind D-glyceraldehyde 3-phosphate. Cysteine 158 (nucleophile) is an active-site residue. Asparagine 322 is a binding site for NAD(+).

This sequence belongs to the glyceraldehyde-3-phosphate dehydrogenase family. As to quaternary structure, homotetramer.

Its subcellular location is the cytoplasm. It carries out the reaction D-glyceraldehyde 3-phosphate + phosphate + NAD(+) = (2R)-3-phospho-glyceroyl phosphate + NADH + H(+). The protein operates within carbohydrate degradation; glycolysis; pyruvate from D-glyceraldehyde 3-phosphate: step 1/5. The protein is Glyceraldehyde-3-phosphate dehydrogenase 3.1 of Caenorhabditis briggsae.